Reading from the N-terminus, the 807-residue chain is Phenylalanine--tRNA ligase beta subunit (807 aa).

The tRNA-binding domain maps to 39–153 (SARAQGVVVG…SLPPNGSPVA (115 aa)). In terms of domain architecture, B5 spans 407 to 491 (AEAGPVLLRR…RLVGFDRFGA (85 aa)). Mg(2+) is bound by residues Asp-469, Asp-475, Glu-478, and Glu-479. Residues 713-806 (PTVPFSERDL…LSKQFQAELR (94 aa)) enclose the FDX-ACB domain.

It belongs to the phenylalanyl-tRNA synthetase beta subunit family. Type 1 subfamily. As to quaternary structure, tetramer of two alpha and two beta subunits. It depends on Mg(2+) as a cofactor.

The protein localises to the cytoplasm. It catalyses the reaction tRNA(Phe) + L-phenylalanine + ATP = L-phenylalanyl-tRNA(Phe) + AMP + diphosphate + H(+). This is Phenylalanine--tRNA ligase beta subunit from Synechococcus sp. (strain CC9605).